The primary structure comprises 739 residues: Catalase-peroxidase (739 aa).

The tryptophyl-tyrosyl-methioninium (Trp-Tyr) (with M-253) cross-link spans 99-227; the sequence is WHSAGTYRMG…LAAVQMGLIY (129 aa). His100 acts as the Proton acceptor in catalysis. A cross-link (tryptophyl-tyrosyl-methioninium (Tyr-Met) (with W-99)) is located at residues 227–253; the sequence is YVNPEGPDGNPDPVASGRDVRETFARM. His268 contributes to the heme b binding site.

It belongs to the peroxidase family. Peroxidase/catalase subfamily. Homodimer or homotetramer. Requires heme b as cofactor. Post-translationally, formation of the three residue Trp-Tyr-Met cross-link is important for the catalase, but not the peroxidase activity of the enzyme.

It carries out the reaction H2O2 + AH2 = A + 2 H2O. The catalysed reaction is 2 H2O2 = O2 + 2 H2O. In terms of biological role, bifunctional enzyme with both catalase and broad-spectrum peroxidase activity. This chain is Catalase-peroxidase, found in Syntrophotalea carbinolica (strain DSM 2380 / NBRC 103641 / GraBd1) (Pelobacter carbinolicus).